We begin with the raw amino-acid sequence, 374 residues long: Methylthioribose-1-phosphate isomerase (374 aa).

N-acetylserine is present on serine 2. The Proton donor role is filled by aspartate 253.

Belongs to the eIF-2B alpha/beta/delta subunits family. MtnA subfamily.

The protein localises to the cytoplasm. It is found in the nucleus. It catalyses the reaction 5-(methylsulfanyl)-alpha-D-ribose 1-phosphate = 5-(methylsulfanyl)-D-ribulose 1-phosphate. The protein operates within amino-acid biosynthesis; L-methionine biosynthesis via salvage pathway; L-methionine from S-methyl-5-thio-alpha-D-ribose 1-phosphate: step 1/6. Functionally, catalyzes the interconversion of methylthioribose-1-phosphate (MTR-1-P) into methylthioribulose-1-phosphate (MTRu-1-P). This is Methylthioribose-1-phosphate isomerase from Arabidopsis thaliana (Mouse-ear cress).